Here is a 391-residue protein sequence, read N- to C-terminus: MAKEKFERSKPHVNIGTIGHVDHGKTTLTAAITKQFGDFQDYASIDSAPEERARGITISTAHVEYETENRHYAHVDCPGHADYVKNMITGAAQMDGAILVVNAADGPMPQTREHILLGRQVGIPYMVVYMNKVDQVDDEELLELVEMEIRELLSSYEYPGDDIPVIPGSALAALEGRDDAIGKDSIDKLMAAVDEYIPTPARAVDQPFLMPIEDVFSISGRGTVVTGRVERGVINVGDEISIVGIRDTTKTTCTGVEMFRKLLDRGEAGDNIGALLRGVDREGVERGQVLCKPGSVDPHTKFEAEAYILTKEEGGRHTPFFANYRPQFYFRTTDVTGTVNLPAGTEMVMPGDNLKFEVELIAPIAMEDGLRFAIREGGRTVGAGVVAKIIE.

The 192-residue stretch at 10–201 (KPHVNIGTIG…AVDEYIPTPA (192 aa)) folds into the tr-type G domain. Positions 19 to 26 (GHVDHGKT) are G1. 19–26 (GHVDHGKT) lines the GTP pocket. T26 is a binding site for Mg(2+). Residues 55 to 59 (GITIS) are G2. Residues 76–79 (DCPG) form a G3 region. GTP-binding positions include 76–80 (DCPGH) and 131–134 (NKVD). A G4 region spans residues 131–134 (NKVD). The interval 169 to 171 (SAL) is G5.

This sequence belongs to the TRAFAC class translation factor GTPase superfamily. Classic translation factor GTPase family. EF-Tu/EF-1A subfamily. In terms of assembly, monomer.

Its subcellular location is the cytoplasm. It catalyses the reaction GTP + H2O = GDP + phosphate + H(+). GTP hydrolase that promotes the GTP-dependent binding of aminoacyl-tRNA to the A-site of ribosomes during protein biosynthesis. The protein is Elongation factor Tu of Jannaschia sp. (strain CCS1).